A 149-amino-acid chain; its full sequence is UPF0260 protein PFLU_1520 (149 aa).

The protein belongs to the UPF0260 family.

The polypeptide is UPF0260 protein PFLU_1520 (Pseudomonas fluorescens (strain SBW25)).